Consider the following 269-residue polypeptide: Interleukin-1 beta (269 aa).

A propeptide spanning residues 1 to 116 (MAEVPELASE…TRNNDACVHD (116 aa)) is cleaved from the precursor.

This sequence belongs to the IL-1 family. In terms of assembly, monomer. In its precursor form, weakly interacts with full-length MEFV; the mature cytokine does not interact at all. Interacts with integrins ITGAV:ITGBV and ITGA5:ITGB1; integrin-binding is required for IL1B signaling. Interacts with cargo receptor TMED10; the interaction is direct and is required for the secretion of IL1B mature form. Interacts with HSP90AB1; the interaction facilitates cargo translocation into the ERGIC. Interacts with HSP90B1; the interaction facilitates cargo translocation into the ERGIC.

It is found in the cytoplasm. The protein localises to the cytosol. Its subcellular location is the secreted. The protein resides in the lysosome. It localises to the extracellular exosome. Functionally, potent pro-inflammatory cytokine. Initially discovered as the major endogenous pyrogen, induces prostaglandin synthesis, neutrophil influx and activation, T-cell activation and cytokine production, B-cell activation and antibody production, and fibroblast proliferation and collagen production. Promotes Th17 differentiation of T-cells. Synergizes with IL12/interleukin-12 to induce IFNG synthesis from T-helper 1 (Th1) cells. Plays a role in angiogenesis by inducing VEGF production synergistically with TNF and IL6. Involved in transduction of inflammation downstream of pyroptosis: its mature form is specifically released in the extracellular milieu by passing through the gasdermin-D (GSDMD) pore. The sequence is that of Interleukin-1 beta (IL1B) from Macaca mulatta (Rhesus macaque).